A 343-amino-acid polypeptide reads, in one-letter code: Holliday junction branch migration complex subunit RuvB (343 aa).

A large ATPase domain (RuvB-L) region spans residues 1 to 186 (MTEEFDIRQE…FGINLHLEYY (186 aa)). Residues L25, R26, G67, K70, T71, T72, 133–135 (EDY), R176, Y186, and R223 each bind ATP. T71 provides a ligand contact to Mg(2+). The segment at 187 to 257 (DVHTITGIVE…IACYALEALN (71 aa)) is small ATPAse domain (RuvB-S). The interval 260 to 343 (RYGLDNVDHK…PRPHRPSLFD (84 aa)) is head domain (RuvB-H). Residues R315 and R320 each contribute to the DNA site.

It belongs to the RuvB family. Homohexamer. Forms an RuvA(8)-RuvB(12)-Holliday junction (HJ) complex. HJ DNA is sandwiched between 2 RuvA tetramers; dsDNA enters through RuvA and exits via RuvB. An RuvB hexamer assembles on each DNA strand where it exits the tetramer. Each RuvB hexamer is contacted by two RuvA subunits (via domain III) on 2 adjacent RuvB subunits; this complex drives branch migration. In the full resolvosome a probable DNA-RuvA(4)-RuvB(12)-RuvC(2) complex forms which resolves the HJ.

The protein localises to the cytoplasm. The catalysed reaction is ATP + H2O = ADP + phosphate + H(+). In terms of biological role, the RuvA-RuvB-RuvC complex processes Holliday junction (HJ) DNA during genetic recombination and DNA repair, while the RuvA-RuvB complex plays an important role in the rescue of blocked DNA replication forks via replication fork reversal (RFR). RuvA specifically binds to HJ cruciform DNA, conferring on it an open structure. The RuvB hexamer acts as an ATP-dependent pump, pulling dsDNA into and through the RuvAB complex. RuvB forms 2 homohexamers on either side of HJ DNA bound by 1 or 2 RuvA tetramers; 4 subunits per hexamer contact DNA at a time. Coordinated motions by a converter formed by DNA-disengaged RuvB subunits stimulates ATP hydrolysis and nucleotide exchange. Immobilization of the converter enables RuvB to convert the ATP-contained energy into a lever motion, pulling 2 nucleotides of DNA out of the RuvA tetramer per ATP hydrolyzed, thus driving DNA branch migration. The RuvB motors rotate together with the DNA substrate, which together with the progressing nucleotide cycle form the mechanistic basis for DNA recombination by continuous HJ branch migration. Branch migration allows RuvC to scan DNA until it finds its consensus sequence, where it cleaves and resolves cruciform DNA. The chain is Holliday junction branch migration complex subunit RuvB from Porphyromonas gingivalis (strain ATCC BAA-308 / W83).